The primary structure comprises 498 residues: ATP synthase subunit beta, chloroplastic (498 aa).

172-179 (GGAGVGKT) is a binding site for ATP.

It belongs to the ATPase alpha/beta chains family. In terms of assembly, F-type ATPases have 2 components, CF(1) - the catalytic core - and CF(0) - the membrane proton channel. CF(1) has five subunits: alpha(3), beta(3), gamma(1), delta(1), epsilon(1). CF(0) has four main subunits: a(1), b(1), b'(1) and c(9-12).

The protein localises to the plastid. It localises to the chloroplast thylakoid membrane. It catalyses the reaction ATP + H2O + 4 H(+)(in) = ADP + phosphate + 5 H(+)(out). In terms of biological role, produces ATP from ADP in the presence of a proton gradient across the membrane. The catalytic sites are hosted primarily by the beta subunits. This chain is ATP synthase subunit beta, chloroplastic, found in Calycanthus floridus var. glaucus (Eastern sweetshrub).